A 647-amino-acid polypeptide reads, in one-letter code: Protein RAD61 (647 aa).

The disordered stretch occupies residues 1-90 (MRAYGKRGPV…QLDSKRNDQN (90 aa)). Positions 66 to 82 (DSSSSFDGANEKPSSQL) are enriched in polar residues.

It localises to the nucleus. Functionally, involved in resistance to ionizing radiation. This Saccharomyces cerevisiae (strain ATCC 204508 / S288c) (Baker's yeast) protein is Protein RAD61 (RAD61).